The primary structure comprises 120 residues: Small ribosomal subunit protein eS24 (120 aa).

The disordered stretch occupies residues 101–120 (RDAGTKQKKGGSKGGQGAKG).

This sequence belongs to the eukaryotic ribosomal protein eS24 family.

The chain is Small ribosomal subunit protein eS24 from Saccharolobus islandicus (strain M.16.4 / Kamchatka #3) (Sulfolobus islandicus).